We begin with the raw amino-acid sequence, 152 residues long: Ubiquitin-conjugating enzyme E2 A (152 aa).

The UBC core domain maps to 4 to 150 (PARRRLMRDF…VSAIVEQSWR (147 aa)). The active-site Glycyl thioester intermediate is Cys88. Ser120 bears the Phosphoserine; by CDK9 mark.

This sequence belongs to the ubiquitin-conjugating enzyme family. Interacts with RAD18 and WAC. Interacts with RFPL4A and CCNB1. In terms of processing, phosphorylation at Ser-120 by CDK9 increases activity towards histone H2B.

It is found in the late endosome. The protein localises to the lysosome. The catalysed reaction is S-ubiquitinyl-[E1 ubiquitin-activating enzyme]-L-cysteine + [E2 ubiquitin-conjugating enzyme]-L-cysteine = [E1 ubiquitin-activating enzyme]-L-cysteine + S-ubiquitinyl-[E2 ubiquitin-conjugating enzyme]-L-cysteine.. It functions in the pathway protein modification; protein ubiquitination. E2 ubiquitin-conjugating enzyme that accepts ubiquitin from the ubiquitin-activating enzyme E1 and transfers it to a E3 ubiquitin-protein ligase. In vitro catalyzes 'Lys-11', as well as 'Lys-48'-linked polyubiquitination. Together with the E3 enzyme BRE1 (RNF20 and/or RNF40), plays a role in transcription regulation by catalyzing the monoubiquitination of histone H2B at 'Lys-120' to form H2BK120ub1. H2BK120ub1 gives a specific tag for epigenetic transcriptional activation, elongation by RNA polymerase II, telomeric silencing, and is also a prerequisite for H3K4me and H3K79me formation. Involved in mitophagy by acting as a E2 ubiquitin-conjugating enzyme for PRKN. In association with the E3 enzyme UBR4, is involved in N-end rule-dependent protein degradation. In association with the E3 ubiquitin-protein ligase complex SIFI, inhibits the mitochondrial stress response by acting as a E2 ubiquitin-conjugating enzyme for UBR4 and KCMF1. The chain is Ubiquitin-conjugating enzyme E2 A from Homo sapiens (Human).